Reading from the N-terminus, the 738-residue chain is Eukaryotic translation initiation factor 3 subunit B (738 aa).

Over residues 1-10 (MAPSFENLSE) the composition is skewed to polar residues. The disordered stretch occupies residues 1 to 20 (MAPSFENLSEQDLHEEEEEE). Residues 40–126 (TFVVIDGLPV…HTLLVNKLMD (87 aa)) enclose the RRM domain. 6 WD repeats span residues 193–230 (AHWTQLFVQWSPKGTYLASVHPQGVQLWGGPTFSKQKQ), 232–289 (PHPF…RSFV), 301–342 (QPKK…LLGK), 454–494 (SLKD…SFFA), 511–554 (IEKK…EKND), and 569–607 (VDHYGVTDIEWDPTGRYVVSGASAWTHQMENGFNLHTFS). A disordered region spans residues 693–720 (EAYGLPEEADQPKAAKDAPTNTEDKGET). Residues 702 to 720 (DQPKAAKDAPTNTEDKGET) are compositionally biased toward basic and acidic residues.

This sequence belongs to the eIF-3 subunit B family. As to quaternary structure, component of the eukaryotic translation initiation factor 3 (eIF-3) complex.

The protein localises to the cytoplasm. Its function is as follows. RNA-binding component of the eukaryotic translation initiation factor 3 (eIF-3) complex, which is involved in protein synthesis of a specialized repertoire of mRNAs and, together with other initiation factors, stimulates binding of mRNA and methionyl-tRNAi to the 40S ribosome. The eIF-3 complex specifically targets and initiates translation of a subset of mRNAs involved in cell proliferation. The polypeptide is Eukaryotic translation initiation factor 3 subunit B (prt1) (Emericella nidulans (strain FGSC A4 / ATCC 38163 / CBS 112.46 / NRRL 194 / M139) (Aspergillus nidulans)).